A 393-amino-acid chain; its full sequence is Formate-dependent phosphoribosylglycinamide formyltransferase (393 aa).

N(1)-(5-phospho-beta-D-ribosyl)glycinamide is bound by residues 20-21 and glutamate 80; that span reads EL. ATP contacts are provided by residues arginine 112, lysine 153, 158 to 163, 193 to 196, and glutamate 201; these read SSGKGQ and EAFI. The 190-residue stretch at 117 to 306 folds into the ATP-grasp domain; the sequence is RLAAEDLNLP…EFELHVRAVL (190 aa). Mg(2+) contacts are provided by glutamate 265 and glutamate 277. N(1)-(5-phospho-beta-D-ribosyl)glycinamide-binding positions include aspartate 284, lysine 354, and 361-362; that span reads RR.

This sequence belongs to the PurK/PurT family. As to quaternary structure, homodimer.

It catalyses the reaction N(1)-(5-phospho-beta-D-ribosyl)glycinamide + formate + ATP = N(2)-formyl-N(1)-(5-phospho-beta-D-ribosyl)glycinamide + ADP + phosphate + H(+). Its pathway is purine metabolism; IMP biosynthesis via de novo pathway; N(2)-formyl-N(1)-(5-phospho-D-ribosyl)glycinamide from N(1)-(5-phospho-D-ribosyl)glycinamide (formate route): step 1/1. Its function is as follows. Involved in the de novo purine biosynthesis. Catalyzes the transfer of formate to 5-phospho-ribosyl-glycinamide (GAR), producing 5-phospho-ribosyl-N-formylglycinamide (FGAR). Formate is provided by PurU via hydrolysis of 10-formyl-tetrahydrofolate. In Syntrophotalea carbinolica (strain DSM 2380 / NBRC 103641 / GraBd1) (Pelobacter carbinolicus), this protein is Formate-dependent phosphoribosylglycinamide formyltransferase.